A 224-amino-acid chain; its full sequence is RNA-free ribonuclease P (224 aa).

Belongs to the HARP family.

The catalysed reaction is Endonucleolytic cleavage of RNA, removing 5'-extranucleotides from tRNA precursor.. RNA-free RNase P that catalyzes the removal of the 5'-leader sequence from pre-tRNA to produce the mature 5'-terminus. This chain is RNA-free ribonuclease P, found in Haloarcula marismortui (strain ATCC 43049 / DSM 3752 / JCM 8966 / VKM B-1809) (Halobacterium marismortui).